The following is a 69-amino-acid chain: Protein translocase subunit SecE (69 aa).

The helical transmembrane segment at 43-63 threads the bilayer; sequence GLGICLLGFVGFVIHVPITYL.

It belongs to the SecE/SEC61-gamma family. As to quaternary structure, component of the Sec protein translocase complex. Heterotrimer consisting of SecY (alpha), SecG (beta) and SecE (gamma) subunits. The heterotrimers can form oligomers, although 1 heterotrimer is thought to be able to translocate proteins. Interacts with the ribosome. May interact with SecDF, and other proteins may be involved.

It is found in the cell membrane. Essential subunit of the Sec protein translocation channel SecYEG. Clamps together the 2 halves of SecY. May contact the channel plug during translocation. This Methanococcus maripaludis (strain DSM 14266 / JCM 13030 / NBRC 101832 / S2 / LL) protein is Protein translocase subunit SecE.